Reading from the N-terminus, the 186-residue chain is Large ribosomal subunit protein uL22 (186 aa).

Ser-158 is modified (phosphoserine). Residues 159 to 186 are disordered; it reads KATDDEPAKKKLSKKKLQRQKEKMLRSE. Thr-161 is subject to Phosphothreonine. The segment covering 177–186 has biased composition (basic and acidic residues); it reads RQKEKMLRSE.

Belongs to the universal ribosomal protein uL22 family.

This is Large ribosomal subunit protein uL22 (RpL17) from Drosophila melanogaster (Fruit fly).